A 584-amino-acid chain; its full sequence is Protein phosphatase 2A scaffold subunit (584 aa).

14 HEAT repeats span residues 7–45, 46–84, 86–123, 168–206, 207–239, 240–278, 279–317, 318–356, 358–395, 397–434, 441–479, 480–512, 513–551, and 553–584; these read ESDD…ALGP, ERTR…FVGG, EHAV…EIPT, LRKT…VKSE, ILPL…MLTN, EENI…SMGT, EITK…LLTK, EMNI…IYGK, DTLT…VIGI, MLSQ…QLGV, LGNL…AKNN, IIPK…VVGG, DVIS…LLDS, and IVQS…LQLC.

Belongs to the phosphatase 2A regulatory subunit A family. In terms of assembly, component of the Sca1 complex composed of at least gefA, gefH, scaA, phr, and the protein phosphatase 2A subunits pppA and pho2B.

It localises to the cytoplasm. The protein localises to the cytosol. It is found in the cell membrane. Scaffolding molecule which may coordinate the assembly of the catalytic subunit and a variable regulatory B subunit. Component of the Sca1 complex, a regulator of cell motility, chemotaxis and signal relay. The Sca1 complex is recruited to the plasma membrane in a chemoattractant- and F-actin-dependent manner and is enriched at the leading edge of chemotaxing cells where it regulates F-actin dynamics and signal relay by controlling the activation of rasC and the downstream target of rapamycin complex 2 (TORC2)-Akt/protein kinase B (PKB) pathway. The polypeptide is Protein phosphatase 2A scaffold subunit (pppA) (Dictyostelium discoideum (Social amoeba)).